Reading from the N-terminus, the 69-residue chain is Fungal defensin oryzeasin (69 aa).

A signal peptide spans 1–18 (MKLLTVAFSLLLLGQVHA). Residues 19–26 (SPLVLDKR) constitute a propeptide that is removed on maturation. 3 cysteine pairs are disulfide-bonded: Cys-29–Cys-60, Cys-44–Cys-66, and Cys-48–Cys-68.

It belongs to the invertebrate defensin family.

It localises to the secreted. It is found in the target cell membrane. Functionally, shows antibacterial activity against numerous Gram-positive bacteria. It selectively inhibits peptidoglycan biosynthesis through complex formation with the cell wall precursor lipid II (1:1 molar ratio) thus inhibiting cell wall synthesis. The sequence is that of Fungal defensin oryzeasin from Aspergillus oryzae (strain ATCC 42149 / RIB 40) (Yellow koji mold).